Here is a 122-residue protein sequence, read N- to C-terminus: Large ribosomal subunit protein bL12 (122 aa).

Belongs to the bacterial ribosomal protein bL12 family. Homodimer. Part of the ribosomal stalk of the 50S ribosomal subunit. Forms a multimeric L10(L12)X complex, where L10 forms an elongated spine to which 2 to 4 L12 dimers bind in a sequential fashion. Binds GTP-bound translation factors.

In terms of biological role, forms part of the ribosomal stalk which helps the ribosome interact with GTP-bound translation factors. Is thus essential for accurate translation. The chain is Large ribosomal subunit protein bL12 from Pseudomonas entomophila (strain L48).